The sequence spans 235 residues: Large ribosomal subunit protein uL1 (235 aa).

Belongs to the universal ribosomal protein uL1 family. As to quaternary structure, part of the 50S ribosomal subunit.

Its function is as follows. Binds directly to 23S rRNA. The L1 stalk is quite mobile in the ribosome, and is involved in E site tRNA release. In terms of biological role, protein L1 is also a translational repressor protein, it controls the translation of the L11 operon by binding to its mRNA. The sequence is that of Large ribosomal subunit protein uL1 from Mycolicibacterium smegmatis (strain ATCC 700084 / mc(2)155) (Mycobacterium smegmatis).